Consider the following 128-residue polypeptide: Fluoride-specific ion channel FluC (128 aa).

A run of 4 helical transmembrane segments spans residues 5 to 25, 35 to 55, 67 to 87, and 96 to 116; these read IVAI…LGLA, LGTL…AVVF, LFVI…SVEV, and FGWA…LTAL. The Na(+) site is built by glycine 75 and threonine 78.

Belongs to the fluoride channel Fluc/FEX (TC 1.A.43) family.

The protein resides in the cell inner membrane. The catalysed reaction is fluoride(in) = fluoride(out). With respect to regulation, na(+) is not transported, but it plays an essential structural role and its presence is essential for fluoride channel function. In terms of biological role, fluoride-specific ion channel. Important for reducing fluoride concentration in the cell, thus reducing its toxicity. The polypeptide is Fluoride-specific ion channel FluC (Burkholderia vietnamiensis (strain G4 / LMG 22486) (Burkholderia cepacia (strain R1808))).